The chain runs to 933 residues: Isoleucine--tRNA ligase (933 aa).

The 'HIGH' region motif lies at 57 to 67 (PYANGNIHMGH). Glu556 is a binding site for L-isoleucyl-5'-AMP. Positions 597 to 601 (KMSKS) match the 'KMSKS' region motif. ATP is bound at residue Lys600. Cys891, Cys894, Cys911, and Cys914 together coordinate Zn(2+).

Belongs to the class-I aminoacyl-tRNA synthetase family. IleS type 1 subfamily. In terms of assembly, monomer. Requires Zn(2+) as cofactor.

It is found in the cytoplasm. It carries out the reaction tRNA(Ile) + L-isoleucine + ATP = L-isoleucyl-tRNA(Ile) + AMP + diphosphate. In terms of biological role, catalyzes the attachment of isoleucine to tRNA(Ile). As IleRS can inadvertently accommodate and process structurally similar amino acids such as valine, to avoid such errors it has two additional distinct tRNA(Ile)-dependent editing activities. One activity is designated as 'pretransfer' editing and involves the hydrolysis of activated Val-AMP. The other activity is designated 'posttransfer' editing and involves deacylation of mischarged Val-tRNA(Ile). The sequence is that of Isoleucine--tRNA ligase from Pediococcus pentosaceus (strain ATCC 25745 / CCUG 21536 / LMG 10740 / 183-1w).